A 632-amino-acid chain; its full sequence is Extracellular metalloproteinase 5 (632 aa).

An N-terminal signal peptide occupies residues 1–20 (MHGLLLAAGLLSLPLHVLAH). Residues 21 to 244 (PQPGTSLAGR…HNVVDYVSHA (224 aa)) constitute a propeptide that is removed on maturation. N284 is a glycosylation site (N-linked (GlcNAc...) asparagine). Zn(2+) is bound at residue H427. Residue E428 is part of the active site. H431 provides a ligand contact to Zn(2+). N591 and N620 each carry an N-linked (GlcNAc...) asparagine glycan.

Belongs to the peptidase M36 family. Zn(2+) is required as a cofactor.

Its subcellular location is the secreted. Functionally, secreted metalloproteinase probably acting as a virulence factor. The polypeptide is Extracellular metalloproteinase 5 (MEP5) (Arthroderma otae (strain ATCC MYA-4605 / CBS 113480) (Microsporum canis)).